Consider the following 218-residue polypeptide: Glutathione S-transferase U24 (218 aa).

In terms of domain architecture, GST N-terminal spans 3-82; sequence DEVILLDFWA…YIDETWPDNN (80 aa). Residues 13–14, 39–40, 53–54, and 66–67 each bind glutathione; these read SM, NK, KI, and ES. The region spanning 88–215 is the GST C-terminal domain; sequence DPYKRAHAKF…TFISERRKKL (128 aa). A Phosphothreonine modification is found at T148.

It belongs to the GST superfamily. Tau family.

It is found in the cytoplasm. Its subcellular location is the cytosol. It carries out the reaction RX + glutathione = an S-substituted glutathione + a halide anion + H(+). Its function is as follows. May be involved in the conjugation of reduced glutathione to a wide number of exogenous and endogenous hydrophobic electrophiles and have a detoxification role against certain herbicides. The polypeptide is Glutathione S-transferase U24 (GSTU24) (Arabidopsis thaliana (Mouse-ear cress)).